The sequence spans 203 residues: uncharacterized protein (203 aa).

This is an uncharacterized protein from Chlorobium limicola.